A 236-amino-acid polypeptide reads, in one-letter code: Ubiquinone biosynthesis O-methyltransferase (236 aa).

S-adenosyl-L-methionine-binding residues include R39, G59, D80, and M124.

It belongs to the methyltransferase superfamily. UbiG/COQ3 family.

It catalyses the reaction a 3-demethylubiquinol + S-adenosyl-L-methionine = a ubiquinol + S-adenosyl-L-homocysteine + H(+). The enzyme catalyses a 3-(all-trans-polyprenyl)benzene-1,2-diol + S-adenosyl-L-methionine = a 2-methoxy-6-(all-trans-polyprenyl)phenol + S-adenosyl-L-homocysteine + H(+). The protein operates within cofactor biosynthesis; ubiquinone biosynthesis. Functionally, O-methyltransferase that catalyzes the 2 O-methylation steps in the ubiquinone biosynthetic pathway. This is Ubiquinone biosynthesis O-methyltransferase from Shewanella oneidensis (strain ATCC 700550 / JCM 31522 / CIP 106686 / LMG 19005 / NCIMB 14063 / MR-1).